The sequence spans 118 residues: Large ribosomal subunit protein bL20 (118 aa).

The protein belongs to the bacterial ribosomal protein bL20 family.

Functionally, binds directly to 23S ribosomal RNA and is necessary for the in vitro assembly process of the 50S ribosomal subunit. It is not involved in the protein synthesizing functions of that subunit. The sequence is that of Large ribosomal subunit protein bL20 from Trichodesmium erythraeum (strain IMS101).